The primary structure comprises 351 residues: Uroporphyrinogen decarboxylase (351 aa).

Substrate contacts are provided by residues 25–29 (RQAGR), Asp-74, Tyr-151, Ser-206, and His-325.

This sequence belongs to the uroporphyrinogen decarboxylase family. In terms of assembly, homodimer.

The protein localises to the cytoplasm. It carries out the reaction uroporphyrinogen III + 4 H(+) = coproporphyrinogen III + 4 CO2. It participates in porphyrin-containing compound metabolism; protoporphyrin-IX biosynthesis; coproporphyrinogen-III from 5-aminolevulinate: step 4/4. Functionally, catalyzes the decarboxylation of four acetate groups of uroporphyrinogen-III to yield coproporphyrinogen-III. In Chlorobium luteolum (strain DSM 273 / BCRC 81028 / 2530) (Pelodictyon luteolum), this protein is Uroporphyrinogen decarboxylase.